Here is a 308-residue protein sequence, read N- to C-terminus: Protein translocase subunit SecF (308 aa).

Transmembrane regions (helical) follow at residues 14–34 (FFLL…LFGF), 134–154 (VYAV…RFEF), 158–178 (ISGI…FALL), 185–205 (TFVA…IVIF), 238–258 (SIRT…FGGI), and 267–287 (LIIG…PIWV).

The protein belongs to the SecD/SecF family. SecF subfamily. As to quaternary structure, forms a complex with SecD. Part of the essential Sec protein translocation apparatus which comprises SecA, SecYEG and auxiliary proteins SecDF. Other proteins may also be involved.

The protein resides in the cell membrane. Functionally, part of the Sec protein translocase complex. Interacts with the SecYEG preprotein conducting channel. SecDF uses the proton motive force (PMF) to complete protein translocation after the ATP-dependent function of SecA. The polypeptide is Protein translocase subunit SecF (Alicyclobacillus acidocaldarius subsp. acidocaldarius (strain ATCC 27009 / DSM 446 / BCRC 14685 / JCM 5260 / KCTC 1825 / NBRC 15652 / NCIMB 11725 / NRRL B-14509 / 104-IA) (Bacillus acidocaldarius)).